Reading from the N-terminus, the 329-residue chain is Isopenicillin N synthase (329 aa).

The isopenicillin N site is built by R87, Y91, S183, and Y189. N-[(5S)-5-amino-5-carboxypentanoyl]-L-cysteinyl-D-valine-binding residues include R87, Y91, S183, Y189, H212, and D214. The Fe2OG dioxygenase domain occupies 180-286 (TLSSVSLIRY…RLSLPFFLNA (107 aa)). H212, D214, and H268 together coordinate Fe(2+). Residue R277 participates in 2-oxoglutarate binding. S279 lines the isopenicillin N pocket. An N-[(5S)-5-amino-5-carboxypentanoyl]-L-cysteinyl-D-valine-binding site is contributed by S279.

The protein belongs to the iron/ascorbate-dependent oxidoreductase family. Fe cation is required as a cofactor. L-ascorbate serves as cofactor.

The catalysed reaction is N-[(5S)-5-amino-5-carboxypentanoyl]-L-cysteinyl-D-valine + O2 = isopenicillin N + 2 H2O. Its pathway is antibiotic biosynthesis; penicillin G biosynthesis; penicillin G from L-alpha-aminoadipate and L-cysteine and L-valine: step 2/3. In terms of biological role, removes, in the presence of oxygen, 4 hydrogen atoms from delta-L-(alpha-aminoadipyl)-L-cysteinyl-D-valine (ACV) to form the azetidinone and thiazolidine rings of isopenicillin. This chain is Isopenicillin N synthase (pcbC), found in Streptomyces jumonjinensis.